A 108-amino-acid polypeptide reads, in one-letter code: DNA-binding protein HBbu (108 aa).

The protein belongs to the bacterial histone-like protein family.

Its function is as follows. Histone-like DNA-binding protein which is capable of wrapping DNA to stabilize it, and thus to prevent its denaturation under extreme environmental conditions. This is DNA-binding protein HBbu (hbb) from Borrelia garinii subsp. bavariensis (strain ATCC BAA-2496 / DSM 23469 / PBi) (Borreliella bavariensis).